We begin with the raw amino-acid sequence, 173 residues long: Pyrimidine operon regulatory protein (173 aa).

Residues 40-41, 97-105, and R130 each bind substrate; these read TR and DDVLYTGRT. The PRPP-binding motif lies at 93–105; that stretch reads VILVDDVLYTGRT.

The protein belongs to the purine/pyrimidine phosphoribosyltransferase family. PyrR subfamily.

In terms of biological role, regulates transcriptional attenuation of the pyrimidine nucleotide (pyr) operon in response to exogenous pyrimidines, probably by binding to specific sites on pyr mRNA. This probably disrupts an antiterminator hairpin in the RNA and favors formation of a downstream transcription terminator, leading to a reduced expression of downstream genes. The sequence is that of Pyrimidine operon regulatory protein from Lactococcus lactis subsp. lactis (strain IL1403) (Streptococcus lactis).